The chain runs to 207 residues: Adenine phosphoribosyltransferase (207 aa).

The interval 1–33 is disordered; it reads MRPAKPPQSKERKRSKSLTSADHDNSPQRAETA.

Belongs to the purine/pyrimidine phosphoribosyltransferase family. In terms of assembly, homodimer.

It is found in the cytoplasm. It catalyses the reaction AMP + diphosphate = 5-phospho-alpha-D-ribose 1-diphosphate + adenine. It functions in the pathway purine metabolism; AMP biosynthesis via salvage pathway; AMP from adenine: step 1/1. Functionally, catalyzes a salvage reaction resulting in the formation of AMP, that is energically less costly than de novo synthesis. The sequence is that of Adenine phosphoribosyltransferase from Corynebacterium jeikeium (strain K411).